Consider the following 252-residue polypeptide: 3-dehydroquinate dehydratase (252 aa).

3-dehydroquinate-binding positions include Ser-21, 46 to 48 (EWR), and Arg-82. His-143 acts as the Proton donor/acceptor in catalysis. Lys-170 serves as the catalytic Schiff-base intermediate with substrate. 3-dehydroquinate-binding residues include Arg-213, Ser-232, and Gln-236.

The protein belongs to the type-I 3-dehydroquinase family. Homodimer.

The enzyme catalyses 3-dehydroquinate = 3-dehydroshikimate + H2O. It participates in metabolic intermediate biosynthesis; chorismate biosynthesis; chorismate from D-erythrose 4-phosphate and phosphoenolpyruvate: step 3/7. Its function is as follows. Involved in the third step of the chorismate pathway, which leads to the biosynthesis of aromatic amino acids. Catalyzes the cis-dehydration of 3-dehydroquinate (DHQ) and introduces the first double bond of the aromatic ring to yield 3-dehydroshikimate. This Escherichia coli O6:K15:H31 (strain 536 / UPEC) protein is 3-dehydroquinate dehydratase.